The primary structure comprises 358 residues: Ion-translocating oxidoreductase complex subunit D (358 aa).

A run of 7 helical transmembrane segments spans residues 16 to 36 (VSRT…FGLW), 38 to 58 (FGWP…VFEV), 68 to 90 (IRPF…TLPP), 128 to 148 (AMLV…VGLL), 206 to 226 (FVPG…GLLL), 236 to 256 (IPLA…FLAP), and 286 to 306 (PVTT…VFVI).

Belongs to the NqrB/RnfD family. As to quaternary structure, the complex is composed of six subunits: RnfA, RnfB, RnfC, RnfD, RnfE and RnfG. The cofactor is FMN.

It localises to the cellular chromatophore membrane. Functionally, part of a membrane-bound complex that couples electron transfer with translocation of ions across the membrane. Required for nitrogen fixation. Involved in electron transfer to nitrogenase. This chain is Ion-translocating oxidoreductase complex subunit D, found in Rhodobacter capsulatus (Rhodopseudomonas capsulata).